Reading from the N-terminus, the 201-residue chain is 3-isopropylmalate dehydratase small subunit (201 aa).

Belongs to the LeuD family. LeuD type 1 subfamily. In terms of assembly, heterodimer of LeuC and LeuD.

It catalyses the reaction (2R,3S)-3-isopropylmalate = (2S)-2-isopropylmalate. Its pathway is amino-acid biosynthesis; L-leucine biosynthesis; L-leucine from 3-methyl-2-oxobutanoate: step 2/4. Catalyzes the isomerization between 2-isopropylmalate and 3-isopropylmalate, via the formation of 2-isopropylmaleate. This Thermus thermophilus (strain ATCC BAA-163 / DSM 7039 / HB27) protein is 3-isopropylmalate dehydratase small subunit.